We begin with the raw amino-acid sequence, 226 residues long: Protein TRI1 (226 aa).

The 56-residue stretch at methionine 1–glycine 56 folds into the DEK-C domain. The segment at glutamine 83 to serine 118 is disordered. Positions arginine 91 to lysine 110 are enriched in basic residues. Position 113 is a phosphoserine (serine 113). One can recognise an SWIB/MDM2 domain in the interval isoleucine 119 to asparagine 195. Over residues valine 200–asparagine 218 the composition is skewed to basic and acidic residues. Positions valine 200–glycine 226 are disordered. Residues lysine 201 and lysine 215 each participate in a glycyl lysine isopeptide (Lys-Gly) (interchain with G-Cter in SUMO) cross-link. Serine 225 is modified (phosphoserine).

It is found in the cytoplasm. The protein localises to the nucleus. The protein resides in the nucleolus. May be involved in transcription regulation. This Saccharomyces cerevisiae (strain ATCC 204508 / S288c) (Baker's yeast) protein is Protein TRI1 (TRI1).